Here is a 315-residue protein sequence, read N- to C-terminus: Ferrochelatase (315 aa).

Fe cation contacts are provided by His-193 and Glu-273.

The protein belongs to the ferrochelatase family.

It is found in the cytoplasm. It catalyses the reaction heme b + 2 H(+) = protoporphyrin IX + Fe(2+). Its pathway is porphyrin-containing compound metabolism; protoheme biosynthesis; protoheme from protoporphyrin-IX: step 1/1. Functionally, catalyzes the ferrous insertion into protoporphyrin IX. The protein is Ferrochelatase of Wolbachia pipientis wMel.